The following is a 114-amino-acid chain: Large ribosomal subunit protein uL22 (114 aa).

Belongs to the universal ribosomal protein uL22 family. Part of the 50S ribosomal subunit.

Its function is as follows. This protein binds specifically to 23S rRNA; its binding is stimulated by other ribosomal proteins, e.g. L4, L17, and L20. It is important during the early stages of 50S assembly. It makes multiple contacts with different domains of the 23S rRNA in the assembled 50S subunit and ribosome. The globular domain of the protein is located near the polypeptide exit tunnel on the outside of the subunit, while an extended beta-hairpin is found that lines the wall of the exit tunnel in the center of the 70S ribosome. In Desulfitobacterium hafniense (strain DSM 10664 / DCB-2), this protein is Large ribosomal subunit protein uL22.